A 252-amino-acid polypeptide reads, in one-letter code: 14-3-3 protein 7 (252 aa).

The protein belongs to the 14-3-3 family. Homodimer.

The sequence is that of 14-3-3 protein 7 (TFT7) from Solanum lycopersicum (Tomato).